We begin with the raw amino-acid sequence, 534 residues long: 26S proteasome non-ATPase regulatory subunit 3 (534 aa).

A compositionally biased stretch (basic and acidic residues) spans 1–16 (MKQEGSARRRGADKAK). The interval 1–68 (MKQEGSARRR…AAEHSQRELD (68 aa)) is disordered. The span at 17–32 (PPPGGGEQEPPPPPAP) shows a compositional bias: pro residues. Lys-38 is covalently cross-linked (Glycyl lysine isopeptide (Lys-Gly) (interchain with G-Cter in SUMO1); alternate). Lys-38 is covalently cross-linked (Glycyl lysine isopeptide (Lys-Gly) (interchain with G-Cter in SUMO2); alternate). Positions 49 to 61 (GETAGKTAAAAAE) are enriched in low complexity. Positions 286 to 465 (ARYLYYTGRI…GYVQSKEMID (180 aa)) constitute a PCI domain. Phosphoserine is present on residues Ser-418 and Ser-430. A disordered region spans residues 500-534 (SYNKDLESAEERREREQQDLEFAKEMAEDDDDSFP). Basic and acidic residues predominate over residues 501-525 (YNKDLESAEERREREQQDLEFAKEM).

This sequence belongs to the proteasome subunit S3 family. In terms of assembly, component of the 19S proteasome regulatory particle complex. The 26S proteasome consists of a 20S core particle (CP) and two 19S regulatory subunits (RP). The regulatory particle is made of a lid composed of 9 subunits including PSMD3, a base containing 6 ATPases and few additional components. Interacts with UBQLN1 (via ubiquitin-like domain). Interacts with ERCC6.

Component of the 26S proteasome, a multiprotein complex involved in the ATP-dependent degradation of ubiquitinated proteins. This complex plays a key role in the maintenance of protein homeostasis by removing misfolded or damaged proteins, which could impair cellular functions, and by removing proteins whose functions are no longer required. Therefore, the proteasome participates in numerous cellular processes, including cell cycle progression, apoptosis, or DNA damage repair. The polypeptide is 26S proteasome non-ATPase regulatory subunit 3 (PSMD3) (Bos taurus (Bovine)).